Reading from the N-terminus, the 421-residue chain is Periplasmic [Fe] hydrogenase large subunit (421 aa).

4Fe-4S ferredoxin-type domains lie at 26-57 and 59-86; these read HFVQIDEAKCIGCDTCSQYCPTAAIFGEMGEP and SIPHIEACINCGQCLTHCPENAIYEAQS. The [4Fe-4S] cluster site is built by C35, C38, C41, C45, C66, C69, C72, C76, C179, C234, C378, and C382. C382 is a Fe(2+) binding site.

As to quaternary structure, heterodimer of a large and a small subunit. [4Fe-4S] cluster is required as a cofactor. The cofactor is Fe(2+).

The protein resides in the periplasm. The enzyme catalyses H2 + 2 oxidized [2Fe-2S]-[ferredoxin] = 2 reduced [2Fe-2S]-[ferredoxin] + 2 H(+). May be involved in hydrogen uptake for the reduction of sulfate to hydrogen sulfide in an electron transport chain. Cytochrome c3 is likely to be the physiological electron carrier for the enzyme. This is Periplasmic [Fe] hydrogenase large subunit (hydA) from Nitratidesulfovibrio vulgaris (strain ATCC 29579 / DSM 644 / CCUG 34227 / NCIMB 8303 / VKM B-1760 / Hildenborough) (Desulfovibrio vulgaris).